Consider the following 414-residue polypeptide: Tryptophan synthase beta chain (414 aa).

The tract at residues 1-26 (MVSTFSRKNQNYKKDDLNQPSKDGRF) is disordered. The span at 12-26 (YKKDDLNQPSKDGRF) shows a compositional bias: basic and acidic residues. K109 bears the N6-(pyridoxal phosphate)lysine mark.

Belongs to the TrpB family. As to quaternary structure, tetramer of two alpha and two beta chains. Pyridoxal 5'-phosphate is required as a cofactor.

The enzyme catalyses (1S,2R)-1-C-(indol-3-yl)glycerol 3-phosphate + L-serine = D-glyceraldehyde 3-phosphate + L-tryptophan + H2O. It participates in amino-acid biosynthesis; L-tryptophan biosynthesis; L-tryptophan from chorismate: step 5/5. In terms of biological role, the beta subunit is responsible for the synthesis of L-tryptophan from indole and L-serine. The sequence is that of Tryptophan synthase beta chain from Prochlorococcus marinus (strain MIT 9215).